Consider the following 100-residue polypeptide: Aspartyl/glutamyl-tRNA(Asn/Gln) amidotransferase subunit C (100 aa).

The protein belongs to the GatC family. As to quaternary structure, heterotrimer of A, B and C subunits.

It carries out the reaction L-glutamyl-tRNA(Gln) + L-glutamine + ATP + H2O = L-glutaminyl-tRNA(Gln) + L-glutamate + ADP + phosphate + H(+). The catalysed reaction is L-aspartyl-tRNA(Asn) + L-glutamine + ATP + H2O = L-asparaginyl-tRNA(Asn) + L-glutamate + ADP + phosphate + 2 H(+). Its function is as follows. Allows the formation of correctly charged Asn-tRNA(Asn) or Gln-tRNA(Gln) through the transamidation of misacylated Asp-tRNA(Asn) or Glu-tRNA(Gln) in organisms which lack either or both of asparaginyl-tRNA or glutaminyl-tRNA synthetases. The reaction takes place in the presence of glutamine and ATP through an activated phospho-Asp-tRNA(Asn) or phospho-Glu-tRNA(Gln). This Streptococcus pneumoniae serotype 19F (strain G54) protein is Aspartyl/glutamyl-tRNA(Asn/Gln) amidotransferase subunit C.